A 350-amino-acid polypeptide reads, in one-letter code: Glyceraldehyde-3-phosphate dehydrogenase (350 aa).

Residues 13 to 14 (TI) and Gly-118 contribute to the NAD(+) site. 147–149 (SCN) serves as a coordination point for D-glyceraldehyde 3-phosphate. Cys-148 acts as the Nucleophile in catalysis. Arg-176 contacts NAD(+). Residue 202-203 (HG) participates in D-glyceraldehyde 3-phosphate binding. Gln-309 serves as a coordination point for NAD(+). Residues 327 to 350 (LEEDPEASMDATDSALGVLNSPPL) form a disordered region.

It belongs to the glyceraldehyde-3-phosphate dehydrogenase family. Homotetramer.

The protein resides in the cytoplasm. It carries out the reaction D-glyceraldehyde 3-phosphate + phosphate + NADP(+) = (2R)-3-phospho-glyceroyl phosphate + NADPH + H(+). It catalyses the reaction D-glyceraldehyde 3-phosphate + phosphate + NAD(+) = (2R)-3-phospho-glyceroyl phosphate + NADH + H(+). It functions in the pathway carbohydrate degradation; glycolysis; pyruvate from D-glyceraldehyde 3-phosphate: step 1/5. The protein is Glyceraldehyde-3-phosphate dehydrogenase of Methanopyrus kandleri (strain AV19 / DSM 6324 / JCM 9639 / NBRC 100938).